The following is a 240-amino-acid chain: uncharacterized protein (240 aa).

It localises to the mitochondrion. This is an uncharacterized protein from Arabidopsis thaliana (Mouse-ear cress).